The following is a 276-amino-acid chain: Aquaporin-6 (276 aa).

Residues 1–22 lie on the Cytoplasmic side of the membrane; the sequence is MEPGLCNRAYLLVGGLWTAISK. A helical membrane pass occupies residues 23–43; the sequence is ALFAEFLATGLYVFFGVGSVL. Topologically, residues 44–51 are extracellular; the sequence is PWPVALPS. A helical membrane pass occupies residues 52–70; it reads VLQVAITFNLATATAVQIS. At 71–75 the chain is on the cytoplasmic side; the sequence is WKTSG. The discontinuously helical intramembrane region spans 76–85; sequence AHANPAVTLA. The short motif at 79-81 is the NPA 1 element; it reads NPA. Topologically, residues 86–96 are cytoplasmic; the sequence is YLVGSHISLPR. The chain crosses the membrane as a helical span at residues 97–118; sequence AVAYIAAQLAGATVGAALLYGV. The Extracellular portion of the chain corresponds to 119 to 138; it reads TPGGVRETLGVNVVHNSTST. A glycan (N-linked (GlcNAc...) asparagine) is linked at asparagine 134. The chain crosses the membrane as a helical span at residues 139–159; that stretch reads GQAVAVELVLTLQLVLCVFAS. The Cytoplasmic portion of the chain corresponds to 160 to 165; it reads MDSRQT. The chain crosses the membrane as a helical span at residues 166-185; that stretch reads LGSPAAMIGTSVALGHLIGI. Over 186–189 the chain is Extracellular; sequence YFTG. An intramembrane region (discontinuously helical) is located at residues 190 to 202; it reads CSMNPARSFGPAV. Residues 193–195 carry the NPA 2 motif; that stretch reads NPA. The Extracellular portion of the chain corresponds to 203–210; it reads IVGKFAVH. A helical membrane pass occupies residues 211-231; it reads WIFWVGPLTGAVLASLIYNFI. Residues 232-276 are Cytoplasmic-facing; the sequence is LFPDTKTVAQRLAILVGTTKVEKVVDLEPQKKESQTNSEDTEVSV.

The protein belongs to the MIP/aquaporin (TC 1.A.8) family. In terms of assembly, homotetramer; each monomer provides an independent solute pore. Post-translationally, N-glycosylated. As to expression, kidney.

It is found in the cytoplasmic vesicle membrane. The enzyme catalyses nitrate(in) = nitrate(out). It catalyses the reaction iodide(out) = iodide(in). It carries out the reaction bromide(in) = bromide(out). The catalysed reaction is chloride(in) = chloride(out). The enzyme catalyses Na(+)(in) = Na(+)(out). It catalyses the reaction H2O(in) = H2O(out). It carries out the reaction CO2(out) = CO2(in). The catalysed reaction is NH4(+)(in) = NH4(+)(out). With respect to regulation, activated by mercury and pH-gated, anion permeability is observed at pH 5.5 and increases markedly at pH 4.0. Selectivity for chloride increases at low pH. The water channel activity is stimulated by mercury by opposition to other aquaporins. Its function is as follows. Aquaporins form homotetrameric transmembrane channels, with each monomer independently mediating water transport across the plasma membrane along its osmotic gradient. Unlike classical aquaporins, AQP6 is an intracellular channel with selective anion permeability, particularly for nitrate, and exhibits very low water permeability. It may also facilitate the transport of gases, such as CO2 and NH4(+), as demonstrated in vitro. The polypeptide is Aquaporin-6 (Rattus norvegicus (Rat)).